The primary structure comprises 1181 residues: Integrin alpha-2 (1181 aa).

Positions 1–29 (MGPERTGAAPLPLLLVLALSQGILNCCLA) are cleaved as a signal peptide. At 30–1132 (YNVGLPEAKI…KPDEKAEVPT (1103 aa)) the chain is on the extracellular side. FG-GAP repeat units follow at residues 34–92 (LPEA…TATC) and 101–161 (TSIP…LSAS). Cysteine 83 and cysteine 92 form a disulfide bridge. 3 N-linked (GlcNAc...) asparagine glycosylation sites follow: asparagine 105, asparagine 112, and asparagine 343. One can recognise a VWFA domain in the interval 188-365 (WDAVKNFLEK…TLGEQIFSIE (178 aa)). 5 FG-GAP repeats span residues 366-420 (GTVQ…LIFP), 423-475 (AFDQ…ENGN), 477-539 (TVIQ…ILGQ), 540-598 (HQFL…TIRT), and 602-664 (QKIL…FTPE). 3 N-linked (GlcNAc...) asparagine glycosylation sites follow: asparagine 432, asparagine 460, and asparagine 475. Positions 499, 501, 503, 507, 563, 565, 567, 571, 627, 629, 631, and 635 each coordinate Ca(2+). 5 disulfides stabilise this stretch: cysteine 680/cysteine 737, cysteine 789/cysteine 795, cysteine 865/cysteine 876, cysteine 1019/cysteine 1050, and cysteine 1055/cysteine 1060. Asparagine 699 is a glycosylation site (N-linked (GlcNAc...) asparagine). N-linked (GlcNAc...) asparagine glycosylation is found at asparagine 1057, asparagine 1074, and asparagine 1081. Residues 1133-1154 (GVIIGSIIAGILLLLALVAILW) traverse the membrane as a helical segment. The tract at residues 1155-1161 (KLGFFKR) is interaction with HPS5. Topologically, residues 1155–1181 (KLGFFKRKYEKMTKNPDEIDETTELSS) are cytoplasmic. Positions 1157–1161 (GFFKR) match the GFFKR motif motif.

It belongs to the integrin alpha chain family. As to quaternary structure, heterodimer of an alpha and a beta subunit. Alpha-2 associates with beta-1. Interacts with HPS5 and RAB21. (Microbial infection) Integrin ITGA2:ITGB1 interacts (via ITAG2 I-domain) with rotavirus A VP4 protein. In terms of assembly, (Microbial infection) Integrin ITGA2:ITGB1 interacts with human echoviruses 1 and 8 capsid proteins.

It is found in the membrane. Its function is as follows. Integrin alpha-2/beta-1 is a receptor for laminin, collagen, collagen C-propeptides, fibronectin and E-cadherin. It recognizes the proline-hydroxylated sequence G-F-P-G-E-R in collagen. It is responsible for adhesion of platelets and other cells to collagens, modulation of collagen and collagenase gene expression, force generation and organization of newly synthesized extracellular matrix. In terms of biological role, (Microbial infection) Integrin ITGA2:ITGB1 acts as a receptor for Human rotavirus A. (Microbial infection) Integrin ITGA2:ITGB1 acts as a receptor for Human echoviruses 1 and 8. The protein is Integrin alpha-2 (ITGA2) of Homo sapiens (Human).